Consider the following 232-residue polypeptide: Pyridoxal 5'-phosphate synthase subunit PdxS (232 aa).

Catalysis depends on lysine 23, which acts as the Schiff-base intermediate with D-ribose 5-phosphate. D-ribose 5-phosphate is bound at residue glycine 95. Arginine 107 lines the D-glyceraldehyde 3-phosphate pocket. D-ribose 5-phosphate-binding positions include glycine 156 and 177–178 (GS).

The protein belongs to the PdxS/SNZ family. In the presence of PdxT, forms a dodecamer of heterodimers.

It catalyses the reaction aldehydo-D-ribose 5-phosphate + D-glyceraldehyde 3-phosphate + L-glutamine = pyridoxal 5'-phosphate + L-glutamate + phosphate + 3 H2O + H(+). It functions in the pathway cofactor biosynthesis; pyridoxal 5'-phosphate biosynthesis. Functionally, catalyzes the formation of pyridoxal 5'-phosphate from ribose 5-phosphate (RBP), glyceraldehyde 3-phosphate (G3P) and ammonia. The ammonia is provided by the PdxT subunit. Can also use ribulose 5-phosphate and dihydroxyacetone phosphate as substrates, resulting from enzyme-catalyzed isomerization of RBP and G3P, respectively. The sequence is that of Pyridoxal 5'-phosphate synthase subunit PdxS from Clostridium novyi.